Consider the following 241-residue polypeptide: MTGSIRSSTAGIDVRQLGSVDYQTAWQMQRDLADARVAGGPDTLLLLQHPAVYTAGRRTEPHERPGPVFAGAAGDEAIDVVDTDRGGKITWHGPGQLVGYPIIRLAQPLDVVNYVRRLEESLIKVSLDLGLETRRVEGRSGVWIPAGSGRPERKIAAIGVRVSRATTLHGFALNCDCDLAAFTAIVPCGISDAGVTSLSAELGRTVGVEEVRGAVADAVCNALDGALPVRDHPGARVASST.

A BPL/LPL catalytic domain is found at 38-227 (AGGPDTLLLL…AVCNALDGAL (190 aa)). Substrate-binding positions include 85–92 (RGGKITWH), 157–159 (AIG), and 170–172 (GFA). The active-site Acyl-thioester intermediate is the C188.

Belongs to the LipB family.

Its subcellular location is the cytoplasm. It carries out the reaction octanoyl-[ACP] + L-lysyl-[protein] = N(6)-octanoyl-L-lysyl-[protein] + holo-[ACP] + H(+). It functions in the pathway protein modification; protein lipoylation via endogenous pathway; protein N(6)-(lipoyl)lysine from octanoyl-[acyl-carrier-protein]: step 1/2. In terms of biological role, catalyzes the transfer of endogenously produced octanoic acid from octanoyl-acyl-carrier-protein onto the lipoyl domains of lipoate-dependent enzymes. Lipoyl-ACP can also act as a substrate although octanoyl-ACP is likely to be the physiological substrate. This Mycobacterium ulcerans (strain Agy99) protein is Octanoyltransferase.